A 452-amino-acid chain; its full sequence is uncharacterized protein (452 aa).

7 helical membrane passes run 18–38, 81–101, 269–289, 317–337, 354–374, 390–410, and 428–448; these read PIIE…VLAK, LLPV…FLLA, IVLL…ALFI, AGQV…ATDI, VIIV…LPAF, VFVV…LTQI, and SYAV…LLVV.

The protein belongs to the auxin efflux carrier (TC 2.A.69) family.

The protein resides in the membrane. This is an uncharacterized protein from Schizosaccharomyces pombe (strain 972 / ATCC 24843) (Fission yeast).